The following is a 312-amino-acid chain: Acetylglutamate kinase (312 aa).

Residues 77–78, Arg-99, and Asn-192 contribute to the substrate site; that span reads GG.

Belongs to the acetylglutamate kinase family. ArgB subfamily.

The protein localises to the cytoplasm. It catalyses the reaction N-acetyl-L-glutamate + ATP = N-acetyl-L-glutamyl 5-phosphate + ADP. It participates in amino-acid biosynthesis; L-arginine biosynthesis; N(2)-acetyl-L-ornithine from L-glutamate: step 2/4. Its function is as follows. Catalyzes the ATP-dependent phosphorylation of N-acetyl-L-glutamate. The sequence is that of Acetylglutamate kinase from Synechococcus sp. (strain JA-2-3B'a(2-13)) (Cyanobacteria bacterium Yellowstone B-Prime).